The primary structure comprises 201 residues: Esterase TesA (201 aa).

The N-terminal stretch at 1–21 (MRALLLSGCLALVLLTQQAAA) is a signal peptide. The active-site Nucleophile is the Ser30. Catalysis depends on residues Asp177 and His180.

Belongs to the 'GDSL' lipolytic enzyme family.

Its subcellular location is the secreted. The enzyme catalyses a carboxylic ester + H2O = an alcohol + a carboxylate + H(+). Esterase that exhibits the highest activity towards Tween detergents and p-nitrophenyl esters of short acyl chain length. Also displays a low thioesterase activity towards palmitoyl-coenzyme A, but is not active towards acetyl-coenzyme A. This Pseudomonas aeruginosa (strain ATCC 15692 / DSM 22644 / CIP 104116 / JCM 14847 / LMG 12228 / 1C / PRS 101 / PAO1) protein is Esterase TesA (tesA).